Consider the following 161-residue polypeptide: MAIPSNLMQFSEDIIKQLTPEEIDEFREAFMMFDKDGNGTISTKELGIAMRSLGQNPTEQEILEMINEVDIDGNGQIEFPEFCVMMKRMMKETDSEMIREAFRVFDKDGNGVITAQEFRYFMVHMGMQFSEEEVDEMIKEVDVDGDGEIDYEEFVKMMSNQ.

4 consecutive EF-hand domains span residues 21–56 (EEID…LGQN), 57–92 (PTEQ…MMKE), 93–128 (TDSE…MGMQ), and 129–161 (FSEE…MSNQ). Asp34, Asp36, Asn38, Thr40, Glu45, Asp70, Asp72, Asn74, Gln76, Glu81, Asp106, Asp108, Asn110, Glu117, Asp142, Asp144, Asp146, Glu148, and Glu153 together coordinate Ca(2+).

Belongs to the calmodulin family.

Its function is as follows. This protein resembles calmodulin in sequence but possibly resembles troponin C in function. The chain is Calmodulin-like protein (cal-1) from Caenorhabditis elegans.